A 579-amino-acid polypeptide reads, in one-letter code: Arginine--tRNA ligase (579 aa).

The 'HIGH' region signature appears at 127–137; it reads PNLAKEMHVGH.

The protein belongs to the class-I aminoacyl-tRNA synthetase family. As to quaternary structure, monomer.

The protein localises to the cytoplasm. It catalyses the reaction tRNA(Arg) + L-arginine + ATP = L-arginyl-tRNA(Arg) + AMP + diphosphate. The chain is Arginine--tRNA ligase from Ectopseudomonas mendocina (strain ymp) (Pseudomonas mendocina).